Reading from the N-terminus, the 275-residue chain is Undecaprenyl-diphosphatase (275 aa).

Transmembrane regions (helical) follow at residues isoleucine 4 to proline 24, leucine 54 to leucine 74, leucine 92 to tyrosine 112, tyrosine 123 to aspartate 143, isoleucine 154 to phenylalanine 174, alanine 194 to leucine 214, methionine 228 to tryptophan 248, and serine 255 to isoleucine 275.

Belongs to the UppP family.

The protein localises to the cell membrane. It carries out the reaction di-trans,octa-cis-undecaprenyl diphosphate + H2O = di-trans,octa-cis-undecaprenyl phosphate + phosphate + H(+). Its function is as follows. Catalyzes the dephosphorylation of undecaprenyl diphosphate (UPP). Confers resistance to bacitracin. This is Undecaprenyl-diphosphatase from Baumannia cicadellinicola subsp. Homalodisca coagulata.